The following is a 201-amino-acid chain: Methylated-DNA--protein-cysteine methyltransferase (201 aa).

3 residues coordinate DNA: Tyr131, Gly132, and Arg146. Catalysis depends on Cys163, which acts as the Nucleophile; methyl group acceptor.

Belongs to the MGMT family.

The protein resides in the nucleus. It carries out the reaction a 6-O-methyl-2'-deoxyguanosine in DNA + L-cysteinyl-[protein] = S-methyl-L-cysteinyl-[protein] + a 2'-deoxyguanosine in DNA. It catalyses the reaction a 4-O-methyl-thymidine in DNA + L-cysteinyl-[protein] = a thymidine in DNA + S-methyl-L-cysteinyl-[protein]. Functionally, involved in the cellular defense against the biological effects of O6-methylguanine (O6-MeG) and O4-methylthymine (O4-MeT) in DNA. Repairs the methylated nucleobase in DNA by stoichiometrically transferring the methyl group to a cysteine residue in the enzyme. This is a suicide reaction: the enzyme is irreversibly inactivated. The sequence is that of Methylated-DNA--protein-cysteine methyltransferase (MGT1) from Lodderomyces elongisporus (strain ATCC 11503 / CBS 2605 / JCM 1781 / NBRC 1676 / NRRL YB-4239) (Yeast).